A 506-amino-acid polypeptide reads, in one-letter code: MHVAILLAIISLARAAPSTKGYTVATSLPGKSAFETRRLPDAPEILKNWAGRLDIPGTTIGNSLFFWLFSAEDKAYDDNLIIWLNGGPGCSSLVGAFLENGPLRFMGNSTMPERNPYSWAKLGHVLYIDQPVGTGFASEKVPVTSNKEVISNLYSWLMSFDAIFDHILRTKKVHIVGESYAGIYIPYIASEIVKRKSELPVNLVSIAIGDGTIGPNTGMSSLGMVGFLEEYASKLRIPRDIMNAISFGDHACGFDIIRQRAKVYPPRGPFHLPGRSGSANNTEISNMLQKGVADESLGSCNIHPDTPEKIRSSIVNSTCYGHCAVFETTADYMSSQQCFSIYNINYGCNFTNPTSTLEAYFSRSDVQIALNLMHPTDPLRPFQSCNPKILETLMAPANRPVPPSFEILPDLLTTHKLPVHIYQGRLDMLINHVGIEVTIQNMTWNGAQGFQDSLHFEFGRQKDKAVGLWNEERGLSYHLFFEGGHFLPADLPMEVLSYVKEVVLRQ.

An N-terminal signal peptide occupies residues 1-15 (MHVAILLAIISLARA). A glycan (N-linked (GlcNAc...) asparagine) is linked at asparagine 108. Serine 179 is a catalytic residue. 3 N-linked (GlcNAc...) asparagine glycosylation sites follow: asparagine 280, asparagine 316, and asparagine 349. Aspartate 427 is an active-site residue. N-linked (GlcNAc...) asparagine glycosylation is present at asparagine 441. Histidine 485 is a catalytic residue.

It belongs to the peptidase S10 family.

It localises to the secreted. The catalysed reaction is Release of a C-terminal amino acid with broad specificity.. Functionally, involved in degradation of small peptides. The sequence is that of Carboxypeptidase Y homolog ARB_06361 from Arthroderma benhamiae (strain ATCC MYA-4681 / CBS 112371) (Trichophyton mentagrophytes).